The following is a 172-amino-acid chain: Large ribosomal subunit protein uL10 (172 aa).

Belongs to the universal ribosomal protein uL10 family. As to quaternary structure, part of the ribosomal stalk of the 50S ribosomal subunit. The N-terminus interacts with L11 and the large rRNA to form the base of the stalk. The C-terminus forms an elongated spine to which L12 dimers bind in a sequential fashion forming a multimeric L10(L12)X complex.

In terms of biological role, forms part of the ribosomal stalk, playing a central role in the interaction of the ribosome with GTP-bound translation factors. The polypeptide is Large ribosomal subunit protein uL10 (Chlorobium chlorochromatii (strain CaD3)).